The primary structure comprises 136 residues: uncharacterized protein (136 aa).

The segment at 1 to 100 (MQSREPSGWR…PCSGGPDRPE (100 aa)) is disordered. Residues 66–75 (RLLRWHHRVP) show a composition bias toward basic residues.

This is an uncharacterized protein from Homo sapiens (Human).